Here is a 696-residue protein sequence, read N- to C-terminus: Potassium voltage-gated channel subfamily KQT member 4 (696 aa).

The disordered stretch occupies residues 1–20; that stretch reads MAEAPPRRLGLGPPPGDAPR. The Cytoplasmic segment spans residues 1–97; that stretch reads MAEAPPRRLG…VYNVLERPRG (97 aa). Position 94 (Arg94) interacts with a 1,2-diacyl-sn-glycero-3-phospho-(1D-myo-inositol-4,5-bisphosphate). The helical transmembrane segment at 98–119 threads the bilayer; that stretch reads WAFVYHVFIFLLVFSCLVLSVL. At 120–130 the chain is on the extracellular side; that stretch reads STIQEHQELAN. A helical membrane pass occupies residues 131–153; it reads ECLLILEFVMIVVFGLEYIIRVW. Topologically, residues 154–169 are cytoplasmic; that stretch reads SAGCCCRYRGWQGRFR. Residues 170–192 traverse the membrane as a helical segment; sequence FARKPFCVIDFIVFVASVAVIAA. Lys173 contacts a 1,2-diacyl-sn-glycero-3-phospho-(1D-myo-inositol-4,5-bisphosphate). Residues 193-203 lie on the Extracellular side of the membrane; sequence GTQGNIFATSA. The helical; Voltage-sensor transmembrane segment at 204–224 threads the bilayer; that stretch reads LRSMRFLQILRMVRMDRRGGT. Residues Arg220, Arg221, Lys226, and Ser236 each coordinate a 1,2-diacyl-sn-glycero-3-phospho-(1D-myo-inositol-4,5-bisphosphate). Over 225–236 the chain is Cytoplasmic; it reads WKLLGSVVYAHS. A helical transmembrane segment spans residues 237-259; that stretch reads KELITAWYIGFLVLIFASFLVYL. The Extracellular segment spans residues 260 to 271; the sequence is AEKDANSDFSSY. The pore-forming intramembrane region spans 272 to 293; the sequence is ADSLWWGTITLTTIGYGDKTPH. Thr294 is a topological domain (extracellular). A helical transmembrane segment spans residues 295–323; the sequence is WLGRVLAAGFALLGISFFALPAGILGSGF. The Cytoplasmic segment spans residues 324-696; that stretch reads ALKVQEQHRQ…ISRSVSTNMD (373 aa). A 1,2-diacyl-sn-glycero-3-phospho-(1D-myo-inositol-4,5-bisphosphate) contacts are provided by His331 and Lys334. Residues 343–352 are interaction with CALM; that stretch reads AANLIQAAWR. Residues 445 to 484 are disordered; that stretch reads SSQKRTGPSKQHLAPPPIPTSPSSEQVGEASSPSKVQKSW. Over residues 465 to 484 the composition is skewed to polar residues; that stretch reads SPSSEQVGEASSPSKVQKSW. The segment at 536-550 is interaction with CALM; sequence RSVRILKFLVAKRKF. Residues 547–651 are C-terminal assembly domain (tetramerization); it reads KRKFKETLRP…SRCLRSGTSA (105 aa). Positions 589–609 are disordered; sequence GRGPGDRKTREKGDKGPSDTE. Residues 592-606 show a composition bias toward basic and acidic residues; that stretch reads PGDRKTREKGDKGPS. Residues 610–645 adopt a coiled-coil conformation; sequence AVDEISMMGRVVKVEKQVQSIEHKLDLLLGFYSRCL.

It belongs to the potassium channel family. KQT (TC 1.A.1.15) subfamily. Kv7.4/KCNQ4 sub-subfamily. Homotetramer. Interacts (via C-terminus) with calmodulin; forms a heterooctameric structure (with 4:4 KCNQ1:CALM stoichiometry); the interaction is calcium-independent, constitutive, participates in the proper assembly of a functional channel. The interaction with calcium-free CALM controls channel trafficking whereas interaction with calcium-bound CALM regulates channel gating. May form a functional heteromultimeric channel with KCNQ3. Interacts with HSP90AB1; promotes cell surface expression of KCNQ4. As to expression, in the inner ear expressed in the outer sensory hair cells of the cochlea and in type I hair cells of the vestibular organs. Also expressed in the postsynaptic membrane of the calyx nerve endings innervating type I cells. In the brain expressed in neurons of many, but not all, nuclei of the central auditory pathway. Absent from most other brain regions.

The protein localises to the basal cell membrane. It carries out the reaction K(+)(in) = K(+)(out). With respect to regulation, two molecules of phosphatidylinositol-4,5-bisphosphate (PIP2-I and PIP2-II) are essential to activate KCNQ4 channel by inducing the coupling of the voltage-sensing domain (VSD) and the pore-forming domain (PD). Upon channel activation, PIP2-I and PIP2-II disrupt the VSD-calmodulin/CALM interaction, causing the release of CALM from the VSD which triggers the opening of the gate. Calcium suppresses KCNQ4 channel current through calcium-bound CALM C-terminus. Therefore CALM acts as calcium sensor that controls channel activity. Its function is as follows. Pore-forming subunit of the voltage-gated potassium (Kv) channel involved in the regulation of sensory cells excitability in the cochlea. KCNQ4/Kv7.4 channel is composed of 4 pore-forming subunits assembled as tetramers. Promotes the outflow of potassium ions in the repolarization phase of action potential which plays a role in regulating membrane potential of excitable cells. The channel conducts a slowly activating and deactivating current. Current often shows some inward rectification at positive potentials. Channel may be selectively permeable in vitro to other cations besides potassium, in decreasing order of affinity K(+) = Rb(+) &gt; Cs(+) &gt; Na(+). Important for normal physiological function of inner ear such as sensory perception of sound. The sequence is that of Potassium voltage-gated channel subfamily KQT member 4 from Mus musculus (Mouse).